The chain runs to 346 residues: 4-hydroxy-2-oxovalerate aldolase (346 aa).

Positions 8 to 260 constitute a Pyruvate carboxyltransferase domain; the sequence is VILHDMSLRD…ETGIDLYKIM (253 aa). 16–17 is a binding site for substrate; that stretch reads RD. A Mn(2+)-binding site is contributed by Asp17. His20 (proton acceptor) is an active-site residue. The substrate site is built by Ser170 and His199. Residues His199 and His201 each coordinate Mn(2+). Position 290 (Tyr290) interacts with substrate.

The protein belongs to the 4-hydroxy-2-oxovalerate aldolase family.

The catalysed reaction is (S)-4-hydroxy-2-oxopentanoate = acetaldehyde + pyruvate. It participates in aromatic compound metabolism; naphthalene degradation. This is 4-hydroxy-2-oxovalerate aldolase (nahM) from Pseudomonas putida (Arthrobacter siderocapsulatus).